The following is a 379-amino-acid chain: 1-deoxy-D-xylulose 5-phosphate reductoisomerase (379 aa).

NADPH-binding residues include T10, G11, S12, V13, and N121. Residue K122 coordinates 1-deoxy-D-xylulose 5-phosphate. Position 123 (E123) interacts with NADPH. A Mn(2+)-binding site is contributed by D147. 1-deoxy-D-xylulose 5-phosphate contacts are provided by S148, E149, S173, and H196. E149 is a binding site for Mn(2+). G202 contacts NADPH. Residues S209, N214, K215, and E218 each contribute to the 1-deoxy-D-xylulose 5-phosphate site. Residue E218 participates in Mn(2+) binding.

It belongs to the DXR family. Mg(2+) serves as cofactor. It depends on Mn(2+) as a cofactor.

It carries out the reaction 2-C-methyl-D-erythritol 4-phosphate + NADP(+) = 1-deoxy-D-xylulose 5-phosphate + NADPH + H(+). It functions in the pathway isoprenoid biosynthesis; isopentenyl diphosphate biosynthesis via DXP pathway; isopentenyl diphosphate from 1-deoxy-D-xylulose 5-phosphate: step 1/6. Its function is as follows. Catalyzes the NADPH-dependent rearrangement and reduction of 1-deoxy-D-xylulose-5-phosphate (DXP) to 2-C-methyl-D-erythritol 4-phosphate (MEP). This Chlamydia abortus (strain DSM 27085 / S26/3) (Chlamydophila abortus) protein is 1-deoxy-D-xylulose 5-phosphate reductoisomerase.